The chain runs to 358 residues: 3-isopropylmalate dehydrogenase (358 aa).

Residue 77–90 (GPKWTNLPPDQQPE) participates in NAD(+) binding. The substrate site is built by Arg98, Arg108, Arg137, and Asp226. Residues Asp226, Asp250, and Asp254 each contribute to the Mg(2+) site. 284-296 (GSAPDIAGKGIAN) lines the NAD(+) pocket.

It belongs to the isocitrate and isopropylmalate dehydrogenases family. LeuB type 1 subfamily. Homodimer. Mg(2+) serves as cofactor. The cofactor is Mn(2+).

It localises to the cytoplasm. The enzyme catalyses (2R,3S)-3-isopropylmalate + NAD(+) = 4-methyl-2-oxopentanoate + CO2 + NADH. The protein operates within amino-acid biosynthesis; L-leucine biosynthesis; L-leucine from 3-methyl-2-oxobutanoate: step 3/4. Its function is as follows. Catalyzes the oxidation of 3-carboxy-2-hydroxy-4-methylpentanoate (3-isopropylmalate) to 3-carboxy-4-methyl-2-oxopentanoate. The product decarboxylates to 4-methyl-2 oxopentanoate. The polypeptide is 3-isopropylmalate dehydrogenase (leuB) (Haemophilus influenzae (strain ATCC 51907 / DSM 11121 / KW20 / Rd)).